We begin with the raw amino-acid sequence, 380 residues long: Ribosomal RNA small subunit methyltransferase, mitochondrial (380 aa).

The N-terminal 26 residues, M1–R26, are a transit peptide targeting the mitochondrion. 6 residues coordinate S-adenosyl-L-methionine: H70, L72, G97, E118, D146, and N161.

It belongs to the class I-like SAM-binding methyltransferase superfamily. rRNA adenine N(6)-methyltransferase family.

It is found in the mitochondrion. It catalyses the reaction adenosine(1914)/adenosine(1915) in 18S rRNA + 4 S-adenosyl-L-methionine = N(6)-dimethyladenosine(1914)/N(6)-dimethyladenosine(1915) in 18S rRNA + 4 S-adenosyl-L-homocysteine + 4 H(+). Its function is as follows. N6-adenine methyltransferase which modifies the AA dinucleotide at the plant mitochondrial 18S rRNA nucleotides A1914 and A1915. Not active as mitochondrial transcription factor. The protein is Ribosomal RNA small subunit methyltransferase, mitochondrial of Arabidopsis thaliana (Mouse-ear cress).